A 160-amino-acid chain; its full sequence is Large ribosomal subunit protein uL16 (160 aa).

Positions 138-160 (INLSSDSSGEGKTGKDSKEEVKK) are disordered. A compositionally biased stretch (basic and acidic residues) spans 149 to 160 (KTGKDSKEEVKK).

Belongs to the universal ribosomal protein uL16 family. As to quaternary structure, part of the 50S ribosomal subunit.

Its function is as follows. Binds 23S rRNA and is also seen to make contacts with the A and possibly P site tRNAs. This is Large ribosomal subunit protein uL16 from Prochlorococcus marinus subsp. pastoris (strain CCMP1986 / NIES-2087 / MED4).